Here is a 1821-residue protein sequence, read N- to C-terminus: PH-interacting protein (1821 aa).

Phosphoserine is present on serine 136. WD repeat units lie at residues 181-222 (GHLS…ATLR), 224-262 (HAAEISDMAVNYENTMIAAGSCDKMIRVWCLRTCAPLAV), 265-310 (GHSA…INPR), 319-360 (RPGV…KISE), and 363-402 (FHTDKVDSIQFSNTSNRFVSGSRDGTARIWQFKRREWKSI). A Glycyl lysine isopeptide (Lys-Gly) (interchain with G-Cter in SUMO2) cross-link involves residue lysine 421. 3 WD repeats span residues 422–461 (ITKMKVTMVAWDRHDNTVITAVNNMTLKVWNSYTGQLIHV), 464–504 (GHED…KVRS), and 512–551 (QGHGAVFDCKCSPDGQHFACTDSHGHLLIFGFGSSSKYDK). 6 positions are modified to phosphoserine: serine 641, serine 659, serine 674, serine 677, serine 683, and serine 692. Disordered regions lie at residues 653–695 (EQDL…SGQI) and 782–927 (DLGD…RLAV). Over residues 665-681 (SNASRVNRGSVSSTSEV) the composition is skewed to polar residues. A compositionally biased stretch (basic and acidic residues) spans 800 to 810 (SALEETPRPLE). A compositionally biased stretch (low complexity) spans 841 to 854 (SDGSSSDYSSDYSD). Serine 879, serine 880, serine 881, and serine 911 each carry phosphoserine. A compositionally biased stretch (basic residues) spans 912-924 (PKKKKPKERKQKR). The segment at 924 to 1129 (RLAVGELTEN…MELIPNNAVF (206 aa)) is mediates interaction with IRS1. The region spanning 1156 to 1263 (WGANPRDEEC…DLLLHFIKDQ (108 aa)) is the Bromo 1 domain. Phosphoserine occurs at positions 1281, 1283, and 1296. The tract at residues 1282–1310 (DSEEEEKDADVPGTSTRKRKDHQPRRRLR) is disordered. Residues 1297–1310 (TRKRKDHQPRRRLR) show a composition bias toward basic residues. Serine 1315 is modified (phosphoserine). The 106-residue stretch at 1316-1421 (YDIQAWKKQC…AFFEEHISSV (106 aa)) folds into the Bromo 2 domain. A Phosphothreonine modification is found at threonine 1359. At serine 1405 the chain carries Phosphoserine. Residues 1435 to 1446 (NTISKKRKKRNR) are compositionally biased toward basic residues. The interval 1435–1507 (NTISKKRKKR…PESSSVVRTR (73 aa)) is disordered. Over residues 1447–1457 (SSSLSSSAASS) the composition is skewed to low complexity. Lysine 1470 is covalently cross-linked (Glycyl lysine isopeptide (Lys-Gly) (interchain with G-Cter in SUMO1); alternate). Lysine 1470 is covalently cross-linked (Glycyl lysine isopeptide (Lys-Gly) (interchain with G-Cter in SUMO2); alternate). Residues 1471–1482 (SEVSTSPFSIPT) show a composition bias toward polar residues. Residue serine 1479 is modified to Phosphoserine. At lysine 1497 the chain carries N6-acetyllysine. Serine 1525 is modified (phosphoserine). At lysine 1533 the chain carries N6-acetyllysine. The segment covering 1556–1576 (STLSSPDPLTFSHATKNNSAK) has biased composition (polar residues). Disordered regions lie at residues 1556–1596 (STLS…VFSK), 1623–1676 (QVNG…NSEQ), and 1740–1785 (RSNR…DSEE). Phosphoserine is present on serine 1560. Lysine 1644 is covalently cross-linked (Glycyl lysine isopeptide (Lys-Gly) (interchain with G-Cter in SUMO2)). At serine 1651 the chain carries Phosphoserine. A Glycyl lysine isopeptide (Lys-Gly) (interchain with G-Cter in SUMO2) cross-link involves residue lysine 1670. Phosphoserine is present on residues serine 1762 and serine 1783.

As to quaternary structure, interacts (via bromo domain) with acetylated lysine residues on histone H1.4, histone H3 and H4 (in vitro). Interacts with IRS1 and IRS2. As to expression, widely expressed with most abundant expression detected in pancreatic islets, brain and skeletal muscle. Predominantly expressed in developing and regenerating neurons. Expressed in adult brain (granular layer of the olfactorium bulb, hippocampus, dentate gyrus and cerebellum internal granular layer). Expressed in the CA3 region of adult hippocampus, adult and fetal retina, perinatal dorsal root ganglion and embryonal olfactory epithelia (at protein level).

The protein localises to the nucleus. Probable regulator of the insulin and insulin-like growth factor signaling pathways. Stimulates cell proliferation through regulation of cyclin transcription and has an anti-apoptotic activity through AKT1 phosphorylation and activation. Plays a role in the regulation of cell morphology and cytoskeletal organization. In Mus musculus (Mouse), this protein is PH-interacting protein (Phip).